The following is a 370-amino-acid chain: Glutamine synthetase (370 aa).

The GS beta-grasp domain maps to 23–102; it reads VLAEYVWIDA…VLTECWNNDG (80 aa). Residues 40 to 69 form a disordered region; sequence CKTLDKKPSSVEDLPEWNFDGSSTGQAPGH. Residues 109–370 form the GS catalytic domain; sequence HRHESAKLMK…FKEYARESSD (262 aa).

Belongs to the glutamine synthetase family. Homooctamer.

The protein resides in the cytoplasm. The enzyme catalyses L-glutamate + NH4(+) + ATP = L-glutamine + ADP + phosphate + H(+). In Debaryomyces hansenii (strain ATCC 36239 / CBS 767 / BCRC 21394 / JCM 1990 / NBRC 0083 / IGC 2968) (Yeast), this protein is Glutamine synthetase (GLN1).